A 260-amino-acid chain; its full sequence is MIRVTVAGAAGRMGREVCRAALEDPEVVLAGGVVEPGSPEVGADLGELCGAGRAGVAASEEPPPEAGVLVEFTTPEATVEHLSYGLPAVIGTTGLSEEQRAKVEEAARGVPIVLAPNMSVGVNLLLGVVRRLSEALGPGYDIEIVEAHHRGKRDAPSGTALLMGRAAASGRGRRLEEVAVYGREGVSPRGEGEIGIHALRGGAVVGEHRVIFYGLGEEVEVVHRALSRRTFAEGALRAARFAAAAQPGLYSMQDVLSSSP.

NAD(+) contacts are provided by residues 8 to 13 (GAAGRM), glutamate 35, 91 to 93 (GTT), and 115 to 118 (APNM). Catalysis depends on histidine 148, which acts as the Proton donor/acceptor. Histidine 149 contributes to the (S)-2,3,4,5-tetrahydrodipicolinate binding site. The active-site Proton donor is lysine 152. 158 to 159 (GT) is a binding site for (S)-2,3,4,5-tetrahydrodipicolinate.

Belongs to the DapB family.

The protein resides in the cytoplasm. It catalyses the reaction (S)-2,3,4,5-tetrahydrodipicolinate + NAD(+) + H2O = (2S,4S)-4-hydroxy-2,3,4,5-tetrahydrodipicolinate + NADH + H(+). It carries out the reaction (S)-2,3,4,5-tetrahydrodipicolinate + NADP(+) + H2O = (2S,4S)-4-hydroxy-2,3,4,5-tetrahydrodipicolinate + NADPH + H(+). Its pathway is amino-acid biosynthesis; L-lysine biosynthesis via DAP pathway; (S)-tetrahydrodipicolinate from L-aspartate: step 4/4. In terms of biological role, catalyzes the conversion of 4-hydroxy-tetrahydrodipicolinate (HTPA) to tetrahydrodipicolinate. The sequence is that of 4-hydroxy-tetrahydrodipicolinate reductase from Rubrobacter xylanophilus (strain DSM 9941 / JCM 11954 / NBRC 16129 / PRD-1).